The chain runs to 134 residues: Profilin-5 (134 aa).

This sequence belongs to the profilin family. As to quaternary structure, occurs in many kinds of cells as a complex with monomeric actin in a 1:1 ratio. As to expression, specifically expressed in mature pollen grains. Expressed in germinating pollen grains. Expressed in growing pollen tubes (at protein level).

The protein resides in the cytoplasm. The protein localises to the cytoskeleton. Functionally, binds to actin monomers and regulates the organization of the actin cytoskeleton. At high concentrations, profilin prevents the polymerization of actin, whereas it enhances it at low concentrations. At low concentrations, associates with the poly-proline motif of formins to enhance actin filament elongation rate. Acts redundantly with PRF4 to regulate apical actin polymerization at the tip of pollen tube and control polarized pollen tube growth. Functions probably by favoring formin-mediated actin polymerization at pollen tube tips. The protein is Profilin-5 of Arabidopsis thaliana (Mouse-ear cress).